Consider the following 204-residue polypeptide: MFHRRKRPYNTRNYGHDDKKFKSQYIDIMPDFSPSGLLELESNNKEGIALKHVEPQDAISPDNYMDMLGLEARDRTMYELVIYRKNDKDKGPWKRYDLNGRSCYLVGRELGHSLDTDLDDRTEIVVADIGIPEETSSKQHCVIQFRNVRGILKCYVMDLDSSNGTCLNNVVIPGARYIELRSGDVLTLSEFEEDNDYELIFMNV.

The region spanning 104–172 (YLVGRELGHS…NGTCLNNVVI (69 aa)) is the FHA domain.

As to quaternary structure, belongs to the pre-mRNA retention and splicing (RES) complex composed of at least BUD13, IST3 and PML1.

Its subcellular location is the cytoplasm. The protein resides in the nucleus. Required for efficient splicing and pre-mRNA nuclear retention. The polypeptide is Pre-mRNA leakage protein 1 (PML1) (Saccharomyces cerevisiae (strain ATCC 204508 / S288c) (Baker's yeast)).